Consider the following 212-residue polypeptide: Large ribosomal subunit protein uL3 (212 aa).

Q153 carries the post-translational modification N5-methylglutamine.

Belongs to the universal ribosomal protein uL3 family. In terms of assembly, part of the 50S ribosomal subunit. Forms a cluster with proteins L14 and L19. Methylated by PrmB.

Its function is as follows. One of the primary rRNA binding proteins, it binds directly near the 3'-end of the 23S rRNA, where it nucleates assembly of the 50S subunit. This chain is Large ribosomal subunit protein uL3, found in Azoarcus sp. (strain BH72).